A 152-amino-acid chain; its full sequence is Transcriptional repressor NrdR (152 aa).

A zinc finger spans residues 3–34 (CPYCQHPDSDVIDTRKLHNGETIRRRRKCEAC). The 91-residue stretch at 49 to 139 (ITVVKKNGER…VYRSFADIGK (91 aa)) folds into the ATP-cone domain.

The protein belongs to the NrdR family. Requires Zn(2+) as cofactor.

Negatively regulates transcription of bacterial ribonucleotide reductase nrd genes and operons by binding to NrdR-boxes. The polypeptide is Transcriptional repressor NrdR (Roseiflexus sp. (strain RS-1)).